Here is a 209-residue protein sequence, read N- to C-terminus: NAD(P)H-quinone oxidoreductase subunit N, chloroplastic (209 aa).

Residues M1–K45 constitute a chloroplast transit peptide.

It belongs to the NDH complex subunit N family. As to quaternary structure, part of the chloroplast NDH complex, composed of a mixture of chloroplast and nucleus encoded subunits. Component of the NDH subcomplex A, at least composed of ndhH, ndhI, ndhJ, ndhK, ndhL, ndhM, ndhN and ndhO.

Its subcellular location is the plastid. The protein resides in the chloroplast thylakoid membrane. The enzyme catalyses a plastoquinone + NADH + (n+1) H(+)(in) = a plastoquinol + NAD(+) + n H(+)(out). The catalysed reaction is a plastoquinone + NADPH + (n+1) H(+)(in) = a plastoquinol + NADP(+) + n H(+)(out). Its function is as follows. NDH shuttles electrons from NAD(P)H:plastoquinone, via FMN and iron-sulfur (Fe-S) centers, to quinones in the photosynthetic chain and possibly in a chloroplast respiratory chain. The immediate electron acceptor for the enzyme in this species is believed to be plastoquinone. Couples the redox reaction to proton translocation, and thus conserves the redox energy in a proton gradient. This chain is NAD(P)H-quinone oxidoreductase subunit N, chloroplastic, found in Arabidopsis thaliana (Mouse-ear cress).